A 197-amino-acid chain; its full sequence is GTP cyclohydrolase-2 (197 aa).

50–54 (RIHSE) is a GTP binding site. Residues C55, C66, and C68 each coordinate Zn(2+). GTP contacts are provided by residues Q71, 93–95 (EGR), and T115. D127 functions as the Proton acceptor in the catalytic mechanism. The Nucleophile role is filled by R129. Positions 150 and 155 each coordinate GTP.

This sequence belongs to the GTP cyclohydrolase II family. It depends on Zn(2+) as a cofactor.

It carries out the reaction GTP + 4 H2O = 2,5-diamino-6-hydroxy-4-(5-phosphoribosylamino)-pyrimidine + formate + 2 phosphate + 3 H(+). Its pathway is cofactor biosynthesis; riboflavin biosynthesis; 5-amino-6-(D-ribitylamino)uracil from GTP: step 1/4. Catalyzes the conversion of GTP to 2,5-diamino-6-ribosylamino-4(3H)-pyrimidinone 5'-phosphate (DARP), formate and pyrophosphate. The protein is GTP cyclohydrolase-2 of Neisseria meningitidis serogroup A / serotype 4A (strain DSM 15465 / Z2491).